The following is a 112-amino-acid chain: Large ribosomal subunit protein uL22 (112 aa).

It belongs to the universal ribosomal protein uL22 family. In terms of assembly, part of the 50S ribosomal subunit.

This protein binds specifically to 23S rRNA; its binding is stimulated by other ribosomal proteins, e.g. L4, L17, and L20. It is important during the early stages of 50S assembly. It makes multiple contacts with different domains of the 23S rRNA in the assembled 50S subunit and ribosome. Functionally, the globular domain of the protein is located near the polypeptide exit tunnel on the outside of the subunit, while an extended beta-hairpin is found that lines the wall of the exit tunnel in the center of the 70S ribosome. The chain is Large ribosomal subunit protein uL22 from Nitratidesulfovibrio vulgaris (strain ATCC 29579 / DSM 644 / CCUG 34227 / NCIMB 8303 / VKM B-1760 / Hildenborough) (Desulfovibrio vulgaris).